Reading from the N-terminus, the 205-residue chain is Ypt/Rab-type GTPase avaA (205 aa).

Residues 17–23, 33–40, G66, 125–128, and 157–159 each bind GTP; these read SGVGKTS, FSGSYKAT, NKID, and SAK. The short motif at 37–45 is the Effector region element; the sequence is YKATIGADF. S-geranylgeranyl cysteine attachment occurs at residues C203 and C205. The residue at position 205 (C205) is a Cysteine methyl ester.

Belongs to the small GTPase superfamily. Rab family.

With respect to regulation, rab activation is generally mediated by a guanine exchange factor (GEF), while inactivation through hydrolysis of bound GTP is catalyzed by a GTPase activating protein (GAP). Functionally, ypt/Rab-type GTPases are key regulators of membrane trafficking and intracellular vesicular transport. They act as molecular switches that convert between GTP-bound and GDP-bound states, and regulate virtually all steps of membrane traffic from the formation of the transport vesicle at the donor membrane to its fusion at the target membrane. In the GDP-bound state, Ypt proteins are predominantly cytosolic, solubilized through the interaction with a GDP dissociation inhibitor (GDI). In the GTP-bound state, the proteins are membrane bound and interact with specific effector proteins that select cargo, promote vesicle movement, or verify the correct site of fusion. AvaA functions in vacuolar biogenesis. The protein is Ypt/Rab-type GTPase avaA of Emericella nidulans (strain FGSC A4 / ATCC 38163 / CBS 112.46 / NRRL 194 / M139) (Aspergillus nidulans).